The primary structure comprises 297 residues: Bifunctional protein FolD 2 (297 aa).

Residues 172 to 174 (GRG), T199, and V240 contribute to the NADP(+) site.

It belongs to the tetrahydrofolate dehydrogenase/cyclohydrolase family. In terms of assembly, homodimer.

The enzyme catalyses (6R)-5,10-methylene-5,6,7,8-tetrahydrofolate + NADP(+) = (6R)-5,10-methenyltetrahydrofolate + NADPH. It catalyses the reaction (6R)-5,10-methenyltetrahydrofolate + H2O = (6R)-10-formyltetrahydrofolate + H(+). Its pathway is one-carbon metabolism; tetrahydrofolate interconversion. Catalyzes the oxidation of 5,10-methylenetetrahydrofolate to 5,10-methenyltetrahydrofolate and then the hydrolysis of 5,10-methenyltetrahydrofolate to 10-formyltetrahydrofolate. The chain is Bifunctional protein FolD 2 from Paenarthrobacter aurescens (strain TC1).